The primary structure comprises 196 residues: UPF0134 protein MPN_501 (196 aa).

It belongs to the UPF0134 family.

The polypeptide is UPF0134 protein MPN_501 (Mycoplasma pneumoniae (strain ATCC 29342 / M129 / Subtype 1) (Mycoplasmoides pneumoniae)).